The following is a 442-amino-acid chain: Myb family transcription factor PHL13 (442 aa).

The region spanning 235–295 (MTSKQRMRWT…HLQKYRTARY (61 aa)) is the HTH myb-type domain. Residues 266–291 (PKAVLKLINSPGLTVYHVKSHLQKYR) constitute a DNA-binding region (H-T-H motif). The interval 329 to 349 (TEALRLQMKVQKQLHEQLEIQ) is coiled coil. Residues 342 to 347 (LHEQLE) carry the LHEQLE motif. Positions 370–380 (QQKMQENKKDS) are enriched in basic and acidic residues. Residues 370-442 (QQKMQENKKD…TSNRKRVRED (73 aa)) form a disordered region. The span at 395 to 434 (SPNLSQPFLHKATNSEPSITQKLQNGSSTMDQSESTSGTS) shows a compositional bias: polar residues.

This sequence belongs to the MYB-CC family.

The protein localises to the nucleus. This Arabidopsis thaliana (Mouse-ear cress) protein is Myb family transcription factor PHL13.